The sequence spans 335 residues: Phosphate acyltransferase (335 aa).

It belongs to the PlsX family. As to quaternary structure, homodimer. Probably interacts with PlsY.

The protein resides in the cytoplasm. It carries out the reaction a fatty acyl-[ACP] + phosphate = an acyl phosphate + holo-[ACP]. It participates in lipid metabolism; phospholipid metabolism. In terms of biological role, catalyzes the reversible formation of acyl-phosphate (acyl-PO(4)) from acyl-[acyl-carrier-protein] (acyl-ACP). This enzyme utilizes acyl-ACP as fatty acyl donor, but not acyl-CoA. The chain is Phosphate acyltransferase from Streptococcus pyogenes serotype M1.